Reading from the N-terminus, the 212-residue chain is Peptide methionine sulfoxide reductase MsrA (212 aa).

Residue C52 is part of the active site.

This sequence belongs to the MsrA Met sulfoxide reductase family.

The enzyme catalyses L-methionyl-[protein] + [thioredoxin]-disulfide + H2O = L-methionyl-(S)-S-oxide-[protein] + [thioredoxin]-dithiol. It catalyses the reaction [thioredoxin]-disulfide + L-methionine + H2O = L-methionine (S)-S-oxide + [thioredoxin]-dithiol. Its function is as follows. Has an important function as a repair enzyme for proteins that have been inactivated by oxidation. Catalyzes the reversible oxidation-reduction of methionine sulfoxide in proteins to methionine. This chain is Peptide methionine sulfoxide reductase MsrA, found in Escherichia fergusonii (strain ATCC 35469 / DSM 13698 / CCUG 18766 / IAM 14443 / JCM 21226 / LMG 7866 / NBRC 102419 / NCTC 12128 / CDC 0568-73).